The following is a 306-amino-acid chain: Methionyl-tRNA formyltransferase (306 aa).

110-113 provides a ligand contact to (6S)-5,6,7,8-tetrahydrofolate; sequence SLLP.

It belongs to the Fmt family.

The enzyme catalyses L-methionyl-tRNA(fMet) + (6R)-10-formyltetrahydrofolate = N-formyl-L-methionyl-tRNA(fMet) + (6S)-5,6,7,8-tetrahydrofolate + H(+). In terms of biological role, attaches a formyl group to the free amino group of methionyl-tRNA(fMet). The formyl group appears to play a dual role in the initiator identity of N-formylmethionyl-tRNA by promoting its recognition by IF2 and preventing the misappropriation of this tRNA by the elongation apparatus. This chain is Methionyl-tRNA formyltransferase, found in Brucella ovis (strain ATCC 25840 / 63/290 / NCTC 10512).